The chain runs to 298 residues: ATP phosphoribosyltransferase (298 aa).

Belongs to the ATP phosphoribosyltransferase family. Long subfamily. Mg(2+) serves as cofactor.

The protein localises to the cytoplasm. It catalyses the reaction 1-(5-phospho-beta-D-ribosyl)-ATP + diphosphate = 5-phospho-alpha-D-ribose 1-diphosphate + ATP. It participates in amino-acid biosynthesis; L-histidine biosynthesis; L-histidine from 5-phospho-alpha-D-ribose 1-diphosphate: step 1/9. Its activity is regulated as follows. Feedback inhibited by histidine. Its function is as follows. Catalyzes the condensation of ATP and 5-phosphoribose 1-diphosphate to form N'-(5'-phosphoribosyl)-ATP (PR-ATP). Has a crucial role in the pathway because the rate of histidine biosynthesis seems to be controlled primarily by regulation of HisG enzymatic activity. This chain is ATP phosphoribosyltransferase, found in Aliivibrio fischeri (strain MJ11) (Vibrio fischeri).